We begin with the raw amino-acid sequence, 848 residues long: Coiled-coil domain-containing protein 110 (848 aa).

The segment at 41 to 62 (SEGVKESGGNEPEYGCASEPEN) is disordered. The stretch at 442 to 794 (LQNYLKESLQ…LSDKVSSQNN (353 aa)) forms a coiled coil. Residue S620 is modified to Phosphoserine.

The protein localises to the nucleus. The chain is Coiled-coil domain-containing protein 110 (Ccdc110) from Mus musculus (Mouse).